Here is a 77-residue protein sequence, read N- to C-terminus: MKLTCVLIIAVLFLIVCQLNTADDSRDKQEYRAVRLRDAIRNSRGSRSCGNLGESCSAHRCCPGLMCMGEASICIPY.

The N-terminal stretch at 1-22 is a signal peptide; the sequence is MKLTCVLIIAVLFLIVCQLNTA. The propeptide occupies 23–47; it reads DDSRDKQEYRAVRLRDAIRNSRGSR. 3 disulfide bridges follow: Cys49–Cys62, Cys56–Cys67, and Cys61–Cys74.

Belongs to the conotoxin O1 superfamily. Expressed by the venom duct.

The protein resides in the secreted. This Conus arenatus (Sand-dusted cone) protein is Conotoxin ArMKLT2-0322.